A 104-amino-acid chain; its full sequence is uncharacterized protein (104 aa).

The tract at residues 62-92 is disordered; it reads SSPAASSHPRKRGKEKKERTPTERLAAPARK.

This is an uncharacterized protein from Human adenovirus B serotype 7 (HAdV-7).